Here is a 201-residue protein sequence, read N- to C-terminus: Large ribosomal subunit protein uL4 (201 aa).

The disordered stretch occupies residues 39 to 72 (RRGTASTKTRAQVSKSGKKMYSQKGTGNARHGDR). Residues 42–53 (TASTKTRAQVSK) show a composition bias toward polar residues.

Belongs to the universal ribosomal protein uL4 family. Part of the 50S ribosomal subunit.

Its function is as follows. One of the primary rRNA binding proteins, this protein initially binds near the 5'-end of the 23S rRNA. It is important during the early stages of 50S assembly. It makes multiple contacts with different domains of the 23S rRNA in the assembled 50S subunit and ribosome. Forms part of the polypeptide exit tunnel. In Deinococcus deserti (strain DSM 17065 / CIP 109153 / LMG 22923 / VCD115), this protein is Large ribosomal subunit protein uL4.